The following is a 130-amino-acid chain: L-ectoine synthase (130 aa).

It belongs to the ectoine synthase family.

It carries out the reaction (2S)-4-acetamido-2-aminobutanoate = L-ectoine + H2O. It functions in the pathway amine and polyamine biosynthesis; ectoine biosynthesis; L-ectoine from L-aspartate 4-semialdehyde: step 3/3. Catalyzes the circularization of gamma-N-acetyl-alpha,gamma-diaminobutyric acid (ADABA) to ectoine (1,4,5,6-tetrahydro-2-methyl-4-pyrimidine carboxylic acid), which is an excellent osmoprotectant. This is L-ectoine synthase from Mycobacteroides abscessus (strain ATCC 19977 / DSM 44196 / CCUG 20993 / CIP 104536 / JCM 13569 / NCTC 13031 / TMC 1543 / L948) (Mycobacterium abscessus).